A 955-amino-acid polypeptide reads, in one-letter code: Bifunctional glutamine synthetase adenylyltransferase/adenylyl-removing enzyme (955 aa).

The segment at 1–458 is adenylyl removase; the sequence is MTAQAPLSVA…QFEQTFSDKQ (458 aa). The adenylyl transferase stretch occupies residues 464-955; that stretch reads CAAIWHADLL…GSIDAASPTP (492 aa).

This sequence belongs to the GlnE family. Requires Mg(2+) as cofactor.

The enzyme catalyses [glutamine synthetase]-O(4)-(5'-adenylyl)-L-tyrosine + phosphate = [glutamine synthetase]-L-tyrosine + ADP. It catalyses the reaction [glutamine synthetase]-L-tyrosine + ATP = [glutamine synthetase]-O(4)-(5'-adenylyl)-L-tyrosine + diphosphate. Functionally, involved in the regulation of glutamine synthetase GlnA, a key enzyme in the process to assimilate ammonia. When cellular nitrogen levels are high, the C-terminal adenylyl transferase (AT) inactivates GlnA by covalent transfer of an adenylyl group from ATP to specific tyrosine residue of GlnA, thus reducing its activity. Conversely, when nitrogen levels are low, the N-terminal adenylyl removase (AR) activates GlnA by removing the adenylyl group by phosphorolysis, increasing its activity. The regulatory region of GlnE binds the signal transduction protein PII (GlnB) which indicates the nitrogen status of the cell. This is Bifunctional glutamine synthetase adenylyltransferase/adenylyl-removing enzyme from Ralstonia nicotianae (strain ATCC BAA-1114 / GMI1000) (Ralstonia solanacearum).